Reading from the N-terminus, the 1063-residue chain is Kinesin-like protein KIN-7H (1063 aa).

Residues 18–342 (KIYVSVRMRP…LLFASCAKEV (325 aa)) enclose the Kinesin motor domain. 106 to 113 (GQTSSGKT) contributes to the ATP binding site. Residues 351–436 (VMSDKALVKH…KNQEKETLST (86 aa)) adopt a coiled-coil conformation. Residues 574-664 (SDISIGPVEN…ESNLTKNPAL (91 aa)) are disordered.

This sequence belongs to the TRAFAC class myosin-kinesin ATPase superfamily. Kinesin family. KIN-7 subfamily.

The protein is Kinesin-like protein KIN-7H of Arabidopsis thaliana (Mouse-ear cress).